A 660-amino-acid chain; its full sequence is DNA mismatch repair protein MutL (660 aa).

This sequence belongs to the DNA mismatch repair MutL/HexB family.

Functionally, this protein is involved in the repair of mismatches in DNA. It is required for dam-dependent methyl-directed DNA mismatch repair. May act as a 'molecular matchmaker', a protein that promotes the formation of a stable complex between two or more DNA-binding proteins in an ATP-dependent manner without itself being part of a final effector complex. This Streptococcus pyogenes serotype M1 protein is DNA mismatch repair protein MutL.